A 285-amino-acid polypeptide reads, in one-letter code: Glutamate racemase (285 aa).

Substrate is bound by residues 28-29 (DS) and 60-61 (YG). The active-site Proton donor/acceptor is C92. 93–94 (NT) contributes to the substrate binding site. Residues R104 and 113-119 (GVVPAIK) contribute to the UDP-N-acetyl-alpha-D-muramoyl-L-alanine site. Residue C204 is the Proton donor/acceptor of the active site. Residue 205–206 (TH) participates in substrate binding.

It belongs to the aspartate/glutamate racemases family. As to quaternary structure, monomer.

The enzyme catalyses L-glutamate = D-glutamate. Its pathway is cell wall biogenesis; peptidoglycan biosynthesis. The low basal catalytic activity in increased 1000-fold in the presence of UDP-MurNAc-L-Ala, the product of the preceding enzyme in the peptidoglycan biosynthesis. In terms of biological role, provides the (R)-glutamate required for cell wall biosynthesis. The protein is Glutamate racemase of Escherichia coli (strain K12).